A 594-amino-acid polypeptide reads, in one-letter code: Trehalase (594 aa).

Residues 1–27 (MDFLNKKIQKILFICILSFLIVNLTKS) form the signal peptide. N-linked (GlcNAc...) asparagine glycans are attached at residues Asn56, Asn70, Asn97, and Asn166. Substrate contacts are provided by residues Arg190, 197-198 (WD), and Asn234. N-linked (GlcNAc...) asparagine glycosylation occurs at Asn242. 243 to 245 (RSQ) is a binding site for substrate. N-linked (GlcNAc...) asparagine glycosylation is found at Asn261 and Asn305. Residues 312 to 314 (RPE) and Gly346 contribute to the substrate site. Asp348 acts as the Proton donor/acceptor in catalysis. N-linked (GlcNAc...) asparagine glycans are attached at residues Asn361, Asn395, Asn513, and Asn537. Catalysis depends on Glu549, which acts as the Proton donor/acceptor. A substrate-binding site is contributed by Glu564.

It belongs to the glycosyl hydrolase 37 family.

The catalysed reaction is alpha,alpha-trehalose + H2O = alpha-D-glucose + beta-D-glucose. The sequence is that of Trehalase (treh) from Dictyostelium discoideum (Social amoeba).